The primary structure comprises 363 residues: Peptide chain release factor 1 (363 aa).

Gln237 carries the N5-methylglutamine modification. The span at 284–296 shows a compositional bias: basic and acidic residues; the sequence is EDEKRRSAEESTR. The segment at 284-306 is disordered; that stretch reads EDEKRRSAEESTRRSLVASGDRS.

This sequence belongs to the prokaryotic/mitochondrial release factor family. In terms of processing, methylated by PrmC. Methylation increases the termination efficiency of RF1.

It is found in the cytoplasm. Its function is as follows. Peptide chain release factor 1 directs the termination of translation in response to the peptide chain termination codons UAG and UAA. The chain is Peptide chain release factor 1 from Shewanella putrefaciens (strain CN-32 / ATCC BAA-453).